The sequence spans 83 residues: Small ribosomal subunit protein uS17 (83 aa).

The protein belongs to the universal ribosomal protein uS17 family. In terms of assembly, part of the 30S ribosomal subunit.

One of the primary rRNA binding proteins, it binds specifically to the 5'-end of 16S ribosomal RNA. The protein is Small ribosomal subunit protein uS17 of Colwellia psychrerythraea (strain 34H / ATCC BAA-681) (Vibrio psychroerythus).